The primary structure comprises 245 residues: tRNA (guanine-N(1)-)-methyltransferase (245 aa).

S-adenosyl-L-methionine-binding positions include glycine 111 and 131–136; that span reads MGDYVL.

It belongs to the RNA methyltransferase TrmD family. Homodimer.

The protein resides in the cytoplasm. The enzyme catalyses guanosine(37) in tRNA + S-adenosyl-L-methionine = N(1)-methylguanosine(37) in tRNA + S-adenosyl-L-homocysteine + H(+). Specifically methylates guanosine-37 in various tRNAs. The chain is tRNA (guanine-N(1)-)-methyltransferase from Staphylococcus epidermidis (strain ATCC 12228 / FDA PCI 1200).